We begin with the raw amino-acid sequence, 303 residues long: Ribonuclease P protein subunit p40 (303 aa).

As to quaternary structure, component of nuclear RNase P and RNase MRP ribonucleoproteins. RNase P consists of a catalytic RNA moiety and about 10 protein subunits; POP1, POP4, POP5, POP7, RPP14, RPP21, RPP25, RPP30, RPP38 and RPP40. Within the RNase P complex, POP1, POP7 and RPP25 form the 'finger' subcomplex, POP5, RPP14, RPP40 and homodimeric RPP30 form the 'palm' subcomplex, and RPP21, POP4 and RPP38 form the 'wrist' subcomplex. All subunits of the RNase P complex interact with the catalytic RNA. Several subunits of RNase P are also part of the RNase MRP complex. RNase MRP consists of a catalytic RNA moiety and about 8 protein subunits; POP1, POP7, RPP25, RPP30, RPP38, RPP40 and possibly also POP4 and POP5.

The protein resides in the nucleus. The protein localises to the nucleolus. Functionally, component of ribonuclease P, a ribonucleoprotein complex that generates mature tRNA molecules by cleaving their 5'-ends. Also a component of the MRP ribonuclease complex, which cleaves pre-rRNA sequences. This Bos taurus (Bovine) protein is Ribonuclease P protein subunit p40 (RPP40).